A 159-amino-acid chain; its full sequence is Putative 4-hydroxy-4-methyl-2-oxoglutarate aldolase (159 aa).

Residues 74–77 (GDNL) and Arg-96 each bind substrate. Asp-97 lines the a divalent metal cation pocket.

Belongs to the class II aldolase/RraA-like family. Homotrimer. A divalent metal cation is required as a cofactor.

It carries out the reaction 4-hydroxy-4-methyl-2-oxoglutarate = 2 pyruvate. The catalysed reaction is oxaloacetate + H(+) = pyruvate + CO2. Functionally, catalyzes the aldol cleavage of 4-hydroxy-4-methyl-2-oxoglutarate (HMG) into 2 molecules of pyruvate. Also contains a secondary oxaloacetate (OAA) decarboxylase activity due to the common pyruvate enolate transition state formed following C-C bond cleavage in the retro-aldol and decarboxylation reactions. The polypeptide is Putative 4-hydroxy-4-methyl-2-oxoglutarate aldolase (Bacillus cereus (strain ZK / E33L)).